The primary structure comprises 184 residues: MMEMAVAKEEKFPTAKRFDIADIQVSREATAVKPKVVANMIKRAKRPLLVTGGQLLKDEKLVEFAVKFAEKGIPIAATAGSSKPLIERGIKPVSKTYTLHQITQFLQDEEFQGFDGNGNYDTVIFLGFLPYYLSRMLSSLKHFSKITTIAIDEFYQPHAKFSFTNLTKDRELYYSMLQEVLDNL.

It belongs to the CdhB family. As to quaternary structure, heterotetramer of two alpha and two epsilon subunits. The ACDS complex is made up of alpha, epsilon, beta, gamma and delta subunits with a probable stoichiometry of (alpha(2)epsilon(2))(4)-beta(8)-(gamma(1)delta(1))(8).

Its function is as follows. Part of a complex that catalyzes the reversible cleavage of acetyl-CoA, allowing autotrophic growth from CO(2). The alpha-epsilon subcomponent functions as a carbon monoxide dehydrogenase. The precise role of the epsilon subunit is unclear; it may have a stabilizing role within the alpha(2)epsilon(2) component and/or be involved in electron transfer to FAD during a potential FAD-mediated CO oxidation. The polypeptide is Acetyl-CoA decarbonylase/synthase complex subunit epsilon 1 (cdhB1) (Archaeoglobus fulgidus (strain ATCC 49558 / DSM 4304 / JCM 9628 / NBRC 100126 / VC-16)).